A 144-amino-acid polypeptide reads, in one-letter code: uncharacterized protein (144 aa).

The disordered stretch occupies residues 90 to 144; the sequence is KKEYSALKKSGKIHKVGGSKSSGHRKTKKPKKSMKGGSKTKKLSEKQLMKELLAM. The span at 98–130 shows a compositional bias: basic residues; sequence KSGKIHKVGGSKSSGHRKTKKPKKSMKGGSKTK.

This is an uncharacterized protein from Sputnik virophage.